A 416-amino-acid chain; its full sequence is Formyl-CoA:oxalate CoA-transferase (416 aa).

CoA-binding positions include 17-18 (QS), Arg-38, 72-75 (LNTK), 96-98 (NFH), His-104, and 137-140 (KAYE). Residue Asp-169 is the Nucleophile of the active site. 248–250 (GGQ) contributes to the substrate binding site. CoA is bound at residue 273 to 275 (QEQ).

The protein belongs to the CoA-transferase III family. Frc subfamily. As to quaternary structure, homodimer.

The enzyme catalyses formyl-CoA + oxalate = oxalyl-CoA + formate. The protein operates within metabolic intermediate degradation; oxalate degradation; CO(2) and formate from oxalate: step 1/2. Its function is as follows. Involved in the catabolism of oxalate and in the adapatation to low pH via the induction of the oxalate-dependent acid tolerance response (ATR). Catalyzes the transfer of the CoA moiety from formyl-CoA to oxalate. The chain is Formyl-CoA:oxalate CoA-transferase from Shigella sonnei (strain Ss046).